The primary structure comprises 143 residues: uncharacterized protein (143 aa).

2 consecutive transmembrane segments (helical) span residues 20-39 (FKYC…WITV) and 113-135 (YFSL…ITGL).

Its subcellular location is the membrane. This is an uncharacterized protein from Saccharomyces cerevisiae (strain ATCC 204508 / S288c) (Baker's yeast).